A 299-amino-acid chain; its full sequence is Acetyl-hydrolase (299 aa).

The short motif at 73-75 is the Involved in the stabilization of the negatively charged intermediate by the formation of the oxyanion hole element; that stretch reads HGG. Catalysis depends on residues Ser-143, Glu-237, and His-267.

The protein belongs to the 'GDXG' lipolytic enzyme family.

It participates in secondary metabolite biosynthesis; bialaphos biosynthesis. In terms of biological role, this protein removes the N-acetyl group from bialaphos as one of the final steps of biosynthesis of phosphinothricin tripeptide (PTT), also known as bialaphos (BA), a natural-product antibiotic and potent herbicide. This is Acetyl-hydrolase (bah) from Streptomyces hygroscopicus.